The following is a 93-amino-acid chain: UPF0213 protein CPE1444 (93 aa).

Residues 1–75 (MNYVYILKCK…KKLTRNQKLQ (75 aa)) enclose the GIY-YIG domain.

The protein belongs to the UPF0213 family.

This is UPF0213 protein CPE1444 from Clostridium perfringens (strain 13 / Type A).